The following is a 194-amino-acid chain: Molybdenum cofactor guanylyltransferase (194 aa).

Residues 12–14 (LAG), K25, N53, D70, and D100 each bind GTP. Residue D100 participates in Mg(2+) binding.

Belongs to the MobA family. In terms of assembly, monomer. Mg(2+) serves as cofactor.

It is found in the cytoplasm. It catalyses the reaction Mo-molybdopterin + GTP + H(+) = Mo-molybdopterin guanine dinucleotide + diphosphate. Transfers a GMP moiety from GTP to Mo-molybdopterin (Mo-MPT) cofactor (Moco or molybdenum cofactor) to form Mo-molybdopterin guanine dinucleotide (Mo-MGD) cofactor. This is Molybdenum cofactor guanylyltransferase from Vibrio atlanticus (strain LGP32) (Vibrio splendidus (strain Mel32)).